The chain runs to 639 residues: 1-deoxy-D-xylulose-5-phosphate synthase 1 (639 aa).

Residues His79 and 120 to 122 (AHS) contribute to the thiamine diphosphate site. Asp155 lines the Mg(2+) pocket. Thiamine diphosphate contacts are provided by residues 156-157 (GA), Asn184, Tyr293, and Glu373. Asn184 is a Mg(2+) binding site.

It belongs to the transketolase family. DXPS subfamily. As to quaternary structure, homodimer. Requires Mg(2+) as cofactor. Thiamine diphosphate is required as a cofactor.

The enzyme catalyses D-glyceraldehyde 3-phosphate + pyruvate + H(+) = 1-deoxy-D-xylulose 5-phosphate + CO2. Its pathway is metabolic intermediate biosynthesis; 1-deoxy-D-xylulose 5-phosphate biosynthesis; 1-deoxy-D-xylulose 5-phosphate from D-glyceraldehyde 3-phosphate and pyruvate: step 1/1. Functionally, catalyzes the acyloin condensation reaction between C atoms 2 and 3 of pyruvate and glyceraldehyde 3-phosphate to yield 1-deoxy-D-xylulose-5-phosphate (DXP). The protein is 1-deoxy-D-xylulose-5-phosphate synthase 1 of Jannaschia sp. (strain CCS1).